The primary structure comprises 436 residues: Ribosomal protein uS12 methylthiotransferase RimO (436 aa).

An MTTase N-terminal domain is found at 2–117 (KNVGIISLGC…IAEVIEKIEK (116 aa)). [4Fe-4S] cluster contacts are provided by C11, C47, C80, C154, C158, and C161. The region spanning 140-369 (TTPNYYAYLK…MEIQKEISYQ (230 aa)) is the Radical SAM core domain. One can recognise a TRAM domain in the interval 372–436 (LSKVGKQLEV…AYEYDLVGEY (65 aa)).

It belongs to the methylthiotransferase family. RimO subfamily. It depends on [4Fe-4S] cluster as a cofactor.

The protein resides in the cytoplasm. The enzyme catalyses L-aspartate(89)-[ribosomal protein uS12]-hydrogen + (sulfur carrier)-SH + AH2 + 2 S-adenosyl-L-methionine = 3-methylsulfanyl-L-aspartate(89)-[ribosomal protein uS12]-hydrogen + (sulfur carrier)-H + 5'-deoxyadenosine + L-methionine + A + S-adenosyl-L-homocysteine + 2 H(+). In terms of biological role, catalyzes the methylthiolation of an aspartic acid residue of ribosomal protein uS12. The chain is Ribosomal protein uS12 methylthiotransferase RimO from Thermoanaerobacter sp. (strain X514).